Here is a 644-residue protein sequence, read N- to C-terminus: Exoribonuclease 2 (644 aa).

The RNB domain maps to 189–516 (RQDLTALNFV…NHRLLKAVIK (328 aa)). The S1 motif domain maps to 561–643 (NTRFAAEIID…ETRSIIARPA (83 aa)).

The protein belongs to the RNR ribonuclease family. RNase II subfamily.

It is found in the cytoplasm. The enzyme catalyses Exonucleolytic cleavage in the 3'- to 5'-direction to yield nucleoside 5'-phosphates.. Involved in mRNA degradation. Hydrolyzes single-stranded polyribonucleotides processively in the 3' to 5' direction. This chain is Exoribonuclease 2, found in Salmonella paratyphi B (strain ATCC BAA-1250 / SPB7).